Here is a 652-residue protein sequence, read N- to C-terminus: Acetyl-coenzyme A synthetase (652 aa).

CoA is bound by residues arginine 191–arginine 194, threonine 311, and asparagine 335. ATP-binding positions include glycine 387 to proline 389, aspartate 411 to threonine 416, aspartate 500, and arginine 515. A CoA-binding site is contributed by serine 523. An ATP-binding site is contributed by arginine 526. Mg(2+)-binding residues include valine 537, histidine 539, and isoleucine 542. CoA is bound at residue arginine 584. Residue lysine 609 is modified to N6-acetyllysine.

It belongs to the ATP-dependent AMP-binding enzyme family. Requires Mg(2+) as cofactor. In terms of processing, acetylated. Deacetylation by the SIR2-homolog deacetylase activates the enzyme.

The catalysed reaction is acetate + ATP + CoA = acetyl-CoA + AMP + diphosphate. Catalyzes the conversion of acetate into acetyl-CoA (AcCoA), an essential intermediate at the junction of anabolic and catabolic pathways. Acs undergoes a two-step reaction. In the first half reaction, Acs combines acetate with ATP to form acetyl-adenylate (AcAMP) intermediate. In the second half reaction, it can then transfer the acetyl group from AcAMP to the sulfhydryl group of CoA, forming the product AcCoA. Its function is as follows. Enables the cell to use acetate during aerobic growth to generate energy via the TCA cycle, and biosynthetic compounds via the glyoxylate shunt. Acetylates CheY, the response regulator involved in flagellar movement and chemotaxis. The sequence is that of Acetyl-coenzyme A synthetase from Escherichia coli O6:H1 (strain CFT073 / ATCC 700928 / UPEC).